Consider the following 177-residue polypeptide: ATP-dependent protease subunit HslV (177 aa).

Threonine 2 is a catalytic residue. Na(+) is bound by residues alanine 159, aspartate 162, and threonine 165.

Belongs to the peptidase T1B family. HslV subfamily. In terms of assembly, a double ring-shaped homohexamer of HslV is capped on each side by a ring-shaped HslU homohexamer. The assembly of the HslU/HslV complex is dependent on binding of ATP.

The protein localises to the cytoplasm. It carries out the reaction ATP-dependent cleavage of peptide bonds with broad specificity.. Allosterically activated by HslU binding. Protease subunit of a proteasome-like degradation complex believed to be a general protein degrading machinery. The polypeptide is ATP-dependent protease subunit HslV (Lactobacillus leichmannii).